Here is a 497-residue protein sequence, read N- to C-terminus: Probable malate:quinone oxidoreductase (497 aa).

It belongs to the MQO family. Requires FAD as cofactor.

The enzyme catalyses (S)-malate + a quinone = a quinol + oxaloacetate. The protein operates within carbohydrate metabolism; tricarboxylic acid cycle; oxaloacetate from (S)-malate (quinone route): step 1/1. The polypeptide is Probable malate:quinone oxidoreductase (Tolumonas auensis (strain DSM 9187 / NBRC 110442 / TA 4)).